Consider the following 243-residue polypeptide: Ribosomal RNA small subunit methyltransferase G (243 aa).

S-adenosyl-L-methionine is bound by residues Gly-80, Phe-85, 132 to 133 (IE), and Arg-151.

Belongs to the methyltransferase superfamily. RNA methyltransferase RsmG family.

Its subcellular location is the cytoplasm. Functionally, specifically methylates the N7 position of a guanine in 16S rRNA. The protein is Ribosomal RNA small subunit methyltransferase G of Synechococcus sp. (strain CC9902).